A 417-amino-acid polypeptide reads, in one-letter code: Inactive GDSL esterase/lipase-like protein 25 (417 aa).

The signal sequence occupies residues 1 to 50; it reads MLLIPSFTANSNEPPPSKLSLSDLSMAILKSHFFLLFPLLLLHFHTVSFA. Asn160, Asn308, and Asn311 each carry an N-linked (GlcNAc...) asparagine glycan. The active site involves His331.

It belongs to the 'GDSL' lipolytic enzyme family. In terms of assembly, interacts with the PYK10 complex and TGG2, but not with TGG1 or PEN2. As to expression, expressed throughout the seedling, rosette leaves, roots, inflorescence and imbibed seed, but not in pollen.

It is found in the vacuole. Its subcellular location is the endoplasmic reticulum. Functionally, involved in organization of the endomembrane system and is required for endoplasmic reticulum morphology and organelle distribution. May act by inhibiting the formation of PYK10 complex by binding to GLL23 and exporting it from the ER. Required for proper subcellular localization of myrosinase TGG2. Has no lipase or esterase activity. The polypeptide is Inactive GDSL esterase/lipase-like protein 25 (MVP1) (Arabidopsis thaliana (Mouse-ear cress)).